The following is a 218-amino-acid chain: Glycerol-3-phosphate acyltransferase (218 aa).

A run of 5 helical transmembrane segments spans residues 4–24 (IALG…AILI), 54–74 (TAAI…WLAY), 80–100 (PFYL…PIFF), 107–127 (GVAT…GLMM), and 130–150 (WLLT…SALI).

The protein belongs to the PlsY family. In terms of assembly, probably interacts with PlsX.

It is found in the cell inner membrane. It carries out the reaction an acyl phosphate + sn-glycerol 3-phosphate = a 1-acyl-sn-glycero-3-phosphate + phosphate. Its pathway is lipid metabolism; phospholipid metabolism. Functionally, catalyzes the transfer of an acyl group from acyl-phosphate (acyl-PO(4)) to glycerol-3-phosphate (G3P) to form lysophosphatidic acid (LPA). This enzyme utilizes acyl-phosphate as fatty acyl donor, but not acyl-CoA or acyl-ACP. This Photorhabdus laumondii subsp. laumondii (strain DSM 15139 / CIP 105565 / TT01) (Photorhabdus luminescens subsp. laumondii) protein is Glycerol-3-phosphate acyltransferase.